We begin with the raw amino-acid sequence, 314 residues long: Dihydroorotate dehydrogenase (fumarate) (314 aa).

Substrate-binding positions include K46, 70 to 74 (NSMGL), and N130. Residue 46–47 (KS) coordinates FMN. Position 130 (N130) interacts with FMN. Active-site nucleophile residues include S132 and C133. 2 residues coordinate FMN: K167 and I195. A substrate-binding site is contributed by 196-197 (NS). Residues G224, 252 to 253 (GG), and 274 to 275 (GT) each bind FMN.

This sequence belongs to the dihydroorotate dehydrogenase family. Type 1 subfamily. In terms of assembly, homodimer. FMN is required as a cofactor.

The protein resides in the cytoplasm. It catalyses the reaction (S)-dihydroorotate + fumarate = orotate + succinate. It functions in the pathway pyrimidine metabolism; UMP biosynthesis via de novo pathway. In terms of biological role, catalyzes the conversion of dihydroorotate to orotate with fumarate as the electron acceptor. This is Dihydroorotate dehydrogenase (fumarate) (URA1) from Saccharomyces paradoxus (Yeast).